Consider the following 234-residue polypeptide: Peptidyl-prolyl cis-trans isomerase FKBP17-3, chloroplastic (234 aa).

A chloroplast-targeting transit peptide spans 1–28; sequence MATLFTATVPSHHRFVSPSQHPKQSLLS. Residues 130–228 enclose the PPIase FKBP-type domain; sequence GYLVVFDVKG…DYIIEVDTVY (99 aa).

This sequence belongs to the FKBP-type PPIase family.

It localises to the plastid. It is found in the chloroplast thylakoid lumen. It carries out the reaction [protein]-peptidylproline (omega=180) = [protein]-peptidylproline (omega=0). Its function is as follows. PPIases accelerate the folding of proteins. It catalyzes the cis-trans isomerization of proline imidic peptide bonds in oligopeptides. This chain is Peptidyl-prolyl cis-trans isomerase FKBP17-3, chloroplastic (FKBP17-3), found in Arabidopsis thaliana (Mouse-ear cress).